Reading from the N-terminus, the 589-residue chain is Muscarinic acetylcholine receptor M3 (589 aa).

Over 1-66 the chain is Extracellular; it reads MTLHSNSTTS…DPLGGHTIWQ (66 aa). 5 N-linked (GlcNAc...) asparagine glycosylation sites follow: N6, N15, N41, N48, and N52. Residues 67 to 90 form a helical membrane-spanning segment; it reads VVFIAFLTGFLALVTIIGNILVIV. Residues 91–103 are Cytoplasmic-facing; the sequence is AFKVNKQLKTVNN. A helical membrane pass occupies residues 104 to 129; it reads YFLLSLACADLIIGVISMNLFTTYII. At 130–141 the chain is on the extracellular side; it reads MNRWALGNLACD. A disulfide bridge links C140 with C220. Residues 142–163 traverse the membrane as a helical segment; it reads LWLSIDYVASNASVMNLLVISF. The Cytoplasmic segment spans residues 164 to 183; the sequence is DRYFSITRPLTYRAKRTTKR. The chain crosses the membrane as a helical span at residues 184-205; that stretch reads AGVMIGLAWVISFVLWAPAILF. Residues 206 to 228 are Extracellular-facing; sequence WQYFVGKRTVPPGECFIQFLSEP. A helical transmembrane segment spans residues 229–251; that stretch reads TITFGTAIAAFYMPVTIMTILYW. At 252–490 the chain is on the cytoplasmic side; it reads RIYKETEKRT…SLIKEKKAAQ (239 aa). Residues 274 to 280 carry the Basolateral sorting signal motif; it reads AEAENFV. Residues 323–356 are disordered; that stretch reads AEQMDQDHSSSDSWNNNDAAASLENSASSDEEDI. The span at 333–344 shows a compositional bias: low complexity; the sequence is SDSWNNNDAAAS. S384 bears the Phosphoserine mark. Residues 491 to 513 form a helical membrane-spanning segment; it reads TLSAILLAFIITWTPYNIMVLVN. Over 514–525 the chain is Extracellular; that stretch reads TFCDSCIPKTYW. Residues C516 and C519 are joined by a disulfide bond. The helical transmembrane segment at 526-545 threads the bilayer; sequence NLGYWLCYINSTVNPVCYAL. Over 546–589 the chain is Cytoplasmic; it reads CNKTFRTTFKTLLLCQCDKRKRRKQQYQQRQSVIFHKRVPEQAL.

Belongs to the G-protein coupled receptor 1 family. Muscarinic acetylcholine receptor subfamily. CHRM3 sub-subfamily. Homodimer; the dimers can form tetramers. Interacts with NALCN. Interacts with TMEM147.

The protein resides in the cell membrane. It localises to the postsynaptic cell membrane. Its subcellular location is the basolateral cell membrane. The protein localises to the endoplasmic reticulum membrane. In terms of biological role, the muscarinic acetylcholine receptor mediates various cellular responses, including inhibition of adenylate cyclase, breakdown of phosphoinositides and modulation of potassium channels through the action of G proteins. Primary transducing effect is Pi turnover. The sequence is that of Muscarinic acetylcholine receptor M3 (Chrm3) from Rattus norvegicus (Rat).